We begin with the raw amino-acid sequence, 310 residues long: Ribosomal RNA small subunit methyltransferase H (310 aa).

S-adenosyl-L-methionine contacts are provided by residues 32–34, D52, F79, D100, and Q107; that span reads GGH.

The protein belongs to the methyltransferase superfamily. RsmH family.

The protein localises to the cytoplasm. The catalysed reaction is cytidine(1402) in 16S rRNA + S-adenosyl-L-methionine = N(4)-methylcytidine(1402) in 16S rRNA + S-adenosyl-L-homocysteine + H(+). Functionally, specifically methylates the N4 position of cytidine in position 1402 (C1402) of 16S rRNA. The chain is Ribosomal RNA small subunit methyltransferase H from Bacillus cereus (strain ATCC 10987 / NRS 248).